Reading from the N-terminus, the 395-residue chain is Chalcone synthase 1 (395 aa).

Val2 is modified (N-acetylvaline). Cys169 is a catalytic residue.

Belongs to the thiolase-like superfamily. Chalcone/stilbene synthases family.

The catalysed reaction is (E)-4-coumaroyl-CoA + 3 malonyl-CoA + 3 H(+) = 2',4,4',6'-tetrahydroxychalcone + 3 CO2 + 4 CoA. It functions in the pathway secondary metabolite biosynthesis; flavonoid biosynthesis. In terms of biological role, the primary product of this enzyme is 4,2',4',6'-tetrahydroxychalcone (also termed naringenin-chalcone or chalcone) which can under specific conditions spontaneously isomerize into naringenin. The sequence is that of Chalcone synthase 1 (CHS1) from Sinapis alba (White mustard).